We begin with the raw amino-acid sequence, 281 residues long: 2-C-methyl-D-erythritol 4-phosphate cytidylyltransferase (281 aa).

This sequence belongs to the IspD/TarI cytidylyltransferase family. IspD subfamily.

It carries out the reaction 2-C-methyl-D-erythritol 4-phosphate + CTP + H(+) = 4-CDP-2-C-methyl-D-erythritol + diphosphate. Its pathway is isoprenoid biosynthesis; isopentenyl diphosphate biosynthesis via DXP pathway; isopentenyl diphosphate from 1-deoxy-D-xylulose 5-phosphate: step 2/6. In terms of biological role, catalyzes the formation of 4-diphosphocytidyl-2-C-methyl-D-erythritol from CTP and 2-C-methyl-D-erythritol 4-phosphate (MEP). In Psychrobacter arcticus (strain DSM 17307 / VKM B-2377 / 273-4), this protein is 2-C-methyl-D-erythritol 4-phosphate cytidylyltransferase.